The primary structure comprises 169 residues: Cell division inhibitor SulA (169 aa).

Positions 106–112 are ftsZ binding; it reads ALRTGNY. Residues 162–169 are lon protease binding; it reads KIHSNLYH.

Belongs to the SulA family. In terms of assembly, interacts with FtsZ. Post-translationally, is rapidly cleaved and degraded by the Lon protease once DNA damage is repaired.

Its function is as follows. Component of the SOS system and an inhibitor of cell division. Accumulation of SulA causes rapid cessation of cell division and the appearance of long, non-septate filaments. In the presence of GTP, binds a polymerization-competent form of FtsZ in a 1:1 ratio, thus inhibiting FtsZ polymerization and therefore preventing it from participating in the assembly of the Z ring. This mechanism prevents the premature segregation of damaged DNA to daughter cells during cell division. This Escherichia coli O81 (strain ED1a) protein is Cell division inhibitor SulA.